A 654-amino-acid chain; its full sequence is Endoplasmic reticulum chaperone BiP (654 aa).

The first 18 residues, 1–18, serve as a signal peptide directing secretion; it reads MKLSLVAAMLLLLSAARA. The interval 1–80 is required for interaction with ELAPOR1; it reads MKLSLVAAML…EGERLIGDAA (80 aa). ATP is bound at residue 36-39; the sequence is GTTY. Serine 86 is subject to Phosphoserine. An ATP-binding site is contributed by lysine 96. Lysine 125 is subject to N6-acetyllysine. Positions 125–280 are nucleotide-binding (NBD); the sequence is KPYIQVDIGG…KKKTGKDVRK (156 aa). A 3'-nitrotyrosine modification is found at tyrosine 160. Residue lysine 213 is modified to N6-acetyllysine. ATP is bound at residue 227–229; the sequence is GGT. N6-acetyllysine is present on lysine 271. 293-300 is an ATP binding site; sequence EKAKRALS. Residue lysine 326 is modified to N6-acetyllysine. Lysine 352 participates in a covalent cross-link: Glycyl lysine isopeptide (Lys-Gly) (interchain with G-Cter in SUMO2). Lysine 353 is modified (N6-acetyllysine; alternate). Lysine 353 is covalently cross-linked (Glycyl lysine isopeptide (Lys-Gly) (interchain with G-Cter in SUMO1); alternate). 364-367 is a binding site for ATP; sequence GSTR. The interdomain linker stretch occupies residues 409–419; the sequence is QDTGDLVLLDV. Residues 420–500 form a substrate-binding (SBD) region; that stretch reads CPLTLGIETV…PRGVPQIEVT (81 aa). Lysine 447 is modified (N6-succinyllysine). Arginine 492 is modified (omega-N-methylarginine). The residue at position 518 (threonine 518) is an O-AMP-threonine; alternate. The residue at position 518 (threonine 518) is a Phosphothreonine; alternate. Lysine 585 carries the post-translational modification N6,N6,N6-trimethyllysine; by METTL21A; in vitro. Lysine 585 is subject to N6,N6-dimethyllysine; alternate. Lysine 585 carries the post-translational modification N6-methyllysine; alternate. Residue lysine 591 is modified to N6-methyllysine. Positions 633–654 are disordered; sequence KLYGSAGPPPTGEEDTAEKDEL. Phosphothreonine occurs at positions 643 and 648. Over residues 644–654 the composition is skewed to acidic residues; that stretch reads GEEDTAEKDEL. The short motif at 651–654 is the Prevents secretion from ER element; it reads KDEL.

Belongs to the heat shock protein 70 family. As to quaternary structure, monomer and homooligomer; homooligomerization via the interdomain linker inactivates the chaperone activity and acts as a storage of HSPA5/BiP molecules. Interacts with DNAJC1 (via J domain). Component of an EIF2 complex at least composed of CELF1/CUGBP1, CALR, CALR3, EIF2S1, EIF2S2, HSP90B1 and HSPA5. Part of a large chaperone multiprotein complex comprising DNAJB11, HSP90B1, HSPA5, HYOU, PDIA2, PDIA4, PDIA6, PPIB, SDF2L1, UGGT1 and very small amounts of ERP29, but not, or at very low levels, CALR nor CANX. Interacts with TMEM132A and TRIM21. May form a complex with ERLEC1, OS9, SEL1L and SYVN1. Interacts with DNAJC10. Interacts with DNAJB9/ERdj4; leading to recruit HSPA5/BiP to ERN1/IRE1. Interacts with ERN1/IRE1 (via luminal domain); the interaction takes place following interaction with DNAJB9/ERdj4 and leads to inactivate ERN1/IRE1, the interaction also competitively inhibits ERN1 interaction with MANF. Interacts directly with MANF (via SAP domain); the interaction inhibits ATP binding to HSPA5/BiP and subsequent nucleotide exchange. Interacts with EIF2AK3/PERK (via luminal domain); interaction leads to inactivate EIF2AK3/PERK. Interacts with MX1. Interacts with METTL23. Interacts with CEMIP; the interaction induces calcium leakage from the endoplasmic reticulum and cell migration. Interacts with PCSK4 form; the interaction takes place in the endoplasmic reticulum. Interacts with CIPC. Interacts with CCDC88B (via C-terminus); the interaction opposes ERN1-mediated JNK activation, protecting against apoptosis. Interacts with INPP5K; necessary for INPP5K localization at the endoplasmic reticulum. Interacts with MANF; the interaction is direct. Interacts with LOXL2; leading to activate the ERN1/IRE1-XBP1 pathway of the unfolded protein response. Interacts with CLU under stressed condition; interaction increases CLU protein stability; facilitates its retrotranslocation and redistribution to the mitochondria; cooperatively suppress stress-induced apoptosis by stabilizing mitochondrial membrane integrity. Interacts with CCDC47. Interacts with CLN3. Interacts with ELAPOR1; may regulate the function of HSPA5 in apoptosis and cell proliferation. Interacts with CASP7. Interacts with ILDR2; the interaction stabilizes ILDR2 expression. Interacts with ADAM7. In terms of assembly, (Microbial infection) Interacts with Japanese encephalitis virus envelope protein E. (Microbial infection) Interacts with R.delemar invasin CotH3 on the surface of nasal epithelial cells. Interacts with R.delemar invasin CotH2. As to quaternary structure, (Microbial infection) Interacts with Zika virus envelope protein E and non-structural protein 1 in a chaperone-client manner. AMPylated by FICD. In unstressed cells, AMPylation at Thr-518 by FICD inactivates the chaperome activity: AMPylated form is locked in a relatively inert state and only weakly stimulated by J domain-containing proteins. In response to endoplasmic reticulum stress, de-AMPylation by the same protein, FICD, restores the chaperone activity.

The protein resides in the endoplasmic reticulum lumen. The protein localises to the melanosome. It localises to the cytoplasm. Its subcellular location is the cell surface. It carries out the reaction ATP + H2O = ADP + phosphate + H(+). With respect to regulation, the chaperone activity is regulated by ATP-induced allosteric coupling of the nucleotide-binding (NBD) and substrate-binding (SBD) domains. In the ADP-bound and nucleotide-free (apo) states, the two domains have little interaction. In contrast, in the ATP-bound state the two domains are tightly coupled, which results in drastically accelerated kinetics in both binding and release of polypeptide substrates. J domain-containing co-chaperones (DNAJB9/ERdj4 or DNAJC10/ERdj5) stimulate the ATPase activity and are required for efficient substrate recognition by HSPA5/BiP. Homooligomerization inactivates participating HSPA5/BiP protomers and probably act as reservoirs to store HSPA5/BiP molecules when they are not needed by the cell. Functionally, endoplasmic reticulum chaperone that plays a key role in protein folding and quality control in the endoplasmic reticulum lumen. Involved in the correct folding of proteins and degradation of misfolded proteins via its interaction with DNAJC10/ERdj5, probably to facilitate the release of DNAJC10/ERdj5 from its substrate. Acts as a key repressor of the EIF2AK3/PERK and ERN1/IRE1-mediated unfolded protein response (UPR). In the unstressed endoplasmic reticulum, recruited by DNAJB9/ERdj4 to the luminal region of ERN1/IRE1, leading to disrupt the dimerization of ERN1/IRE1, thereby inactivating ERN1/IRE1. Also binds and inactivates EIF2AK3/PERK in unstressed cells. Accumulation of misfolded protein in the endoplasmic reticulum causes release of HSPA5/BiP from ERN1/IRE1 and EIF2AK3/PERK, allowing their homodimerization and subsequent activation. Plays an auxiliary role in post-translational transport of small presecretory proteins across endoplasmic reticulum (ER). May function as an allosteric modulator for SEC61 channel-forming translocon complex, likely cooperating with SEC62 to enable the productive insertion of these precursors into SEC61 channel. Appears to specifically regulate translocation of precursors having inhibitory residues in their mature region that weaken channel gating. May also play a role in apoptosis and cell proliferation. In terms of biological role, (Microbial infection) Plays an important role in viral binding to the host cell membrane and entry for several flaviruses such as Dengue virus, Zika virus and Japanese encephalitis virus. Acts as a component of the cellular receptor for Dengue virus serotype 2/DENV-2 on human liver cells. (Microbial infection) Acts as a receptor for CotH proteins expressed by fungi of the order mucorales, the causative agent of mucormycosis, which plays an important role in epithelial cell invasion by the fungi. Acts as a receptor for R.delemar CotH3 in nasal epithelial cells, which may be an early step in rhinoorbital/cerebral mucormycosis (RCM) disease progression. This chain is Endoplasmic reticulum chaperone BiP, found in Homo sapiens (Human).